The sequence spans 648 residues: Threonine--tRNA ligase (648 aa).

Residues 1 to 61 (MIKITFPNTS…NENASVKLYK (61 aa)) enclose the TGS domain. Residues 243 to 542 (DHRRIGKEME…MIEHTGGKFP (300 aa)) form a catalytic region. Residues Cys-338, His-389, and His-519 each contribute to the Zn(2+) site.

This sequence belongs to the class-II aminoacyl-tRNA synthetase family. In terms of assembly, homodimer. Zn(2+) is required as a cofactor.

The protein resides in the cytoplasm. It carries out the reaction tRNA(Thr) + L-threonine + ATP = L-threonyl-tRNA(Thr) + AMP + diphosphate + H(+). Its function is as follows. Catalyzes the attachment of threonine to tRNA(Thr) in a two-step reaction: L-threonine is first activated by ATP to form Thr-AMP and then transferred to the acceptor end of tRNA(Thr). Also edits incorrectly charged L-seryl-tRNA(Thr). This is Threonine--tRNA ligase from Azobacteroides pseudotrichonymphae genomovar. CFP2.